The following is a 271-amino-acid chain: Probable CAAX prenyl protease 2 (271 aa).

The next 2 helical transmembrane spans lie at 3 to 23 (VYLI…TFPV) and 42 to 62 (CISV…IIGP). Active-site proton donor/acceptor residues include E126 and H160. 2 helical membrane passes run 174–194 (AYIA…VFGW) and 236–256 (IYYT…GITD).

Belongs to the peptidase U48 family.

Its subcellular location is the endoplasmic reticulum membrane. The enzyme catalyses Hydrolyzes the peptide bond -P2-(S-farnesyl or geranylgeranyl)C-P1'-P2'-P3'-COOH where P1' and P2' are amino acids with aliphatic sidechains and P3' is any C-terminal residue.. Its function is as follows. Protease involved in the processing of a variety of prenylated proteins containing the C-terminal CAAX motif, where C is a cysteine modified with an isoprenoid lipid, A is an aliphatic amino acid and X is any C-terminal amino acid. Proteolytically removes the C-terminal three residues of farnesylated proteins, leaving the prenylated cysteine as the new C-terminus. This Schizosaccharomyces pombe (strain 972 / ATCC 24843) (Fission yeast) protein is Probable CAAX prenyl protease 2.